The sequence spans 574 residues: Septation ring formation regulator EzrA (574 aa).

At 1-7 (MSSGIIL) the chain is on the extracellular side. Residues 8-26 (LIVAIVLLVIIAYLIGVII) form a helical membrane-spanning segment. Topologically, residues 27 to 574 (RKRNDSMIGT…YERTREHIRF (548 aa)) are cytoplasmic. Coiled-coil stretches lie at residues 102–140 (NFIR…QEEK), 243–379 (RRLL…GQEI), and 459–520 (QLEA…SFEA).

Belongs to the EzrA family.

It is found in the cell membrane. Negative regulator of FtsZ ring formation; modulates the frequency and position of FtsZ ring formation. Inhibits FtsZ ring formation at polar sites. Interacts either with FtsZ or with one of its binding partners to promote depolymerization. This is Septation ring formation regulator EzrA from Streptococcus uberis (strain ATCC BAA-854 / 0140J).